We begin with the raw amino-acid sequence, 323 residues long: Mycothiol acetyltransferase (323 aa).

N-acetyltransferase domains follow at residues 21–176 (ELLR…VSLR) and 173–323 (VSLR…LTKN). Glutamate 44 contributes to the 1D-myo-inositol 2-(L-cysteinylamino)-2-deoxy-alpha-D-glucopyranoside binding site. An acetyl-CoA-binding site is contributed by 98–100 (LAV). 1D-myo-inositol 2-(L-cysteinylamino)-2-deoxy-alpha-D-glucopyranoside contacts are provided by glutamate 200, lysine 240, and glutamate 253. Residues 257-259 (VGV) and 264-270 (QGLGLGK) each bind acetyl-CoA. Tyrosine 291 contributes to the 1D-myo-inositol 2-(L-cysteinylamino)-2-deoxy-alpha-D-glucopyranoside binding site.

The protein belongs to the acetyltransferase family. MshD subfamily. Monomer.

It carries out the reaction 1D-myo-inositol 2-(L-cysteinylamino)-2-deoxy-alpha-D-glucopyranoside + acetyl-CoA = mycothiol + CoA + H(+). Functionally, catalyzes the transfer of acetyl from acetyl-CoA to desacetylmycothiol (Cys-GlcN-Ins) to form mycothiol. The chain is Mycothiol acetyltransferase from Paenarthrobacter aurescens (strain TC1).